Consider the following 412-residue polypeptide: MSDLPRIFRFINRTSLVAQIVVGLLAGALLALFLPGAAKSVALLGDLFVQALKAVAPVLVFVLVTSSLANHKRGQPTHIRPIIVLYALGTLSAAAVAVLASFLFPTSLTLVSEATDVIPPAGVGAVLNTLLFNIVDNPVRALLNGNFIGILAWAIGLGFAFRHAQDSTRRLIGDLSDGVTLIVKVVIRFAPLGVFGLVAGTLADSGFDVLLGYARLLLVLVGAMLFMALVMNPLIVFWQIRRNPYPLVFTCLRESGITAFFTRSSAANIPVNMQLCQRLGLHKDTYSVSIPLGATINMGGAAITITVLTLAAVNTLGIQVDVATAVLLSLLAAVCACGASGVAGGSLLLIPLACSLFGISNDLAMQVVAVGFIIGVVQDSAETALNSSTDVLFTAASCIAHGDIDEGAERRV.

Transmembrane regions (helical) follow at residues 16-36 (LVAQ…FLPG), 44-64 (LGDL…FVLV), 82-102 (IIVL…LASF), 115-135 (TDVI…FNIV), 141-161 (ALLN…GFAF), 179-199 (VTLI…GLVA), 217-237 (LLVL…LIVF), 298-318 (MGGA…TLGI), 330-350 (LLAA…LLLI), and 357-377 (FGIS…IGVV).

The protein belongs to the dicarboxylate/amino acid:cation symporter (DAACS) (TC 2.A.23) family.

It localises to the cell inner membrane. The catalysed reaction is L-serine(in) + Na(+)(in) = L-serine(out) + Na(+)(out). It carries out the reaction L-threonine(in) + Na(+)(in) = L-threonine(out) + Na(+)(out). Functionally, involved in the import of serine and threonine into the cell, with the concomitant import of sodium (symport system). In Stutzerimonas stutzeri (strain A1501) (Pseudomonas stutzeri), this protein is Serine/threonine transporter SstT.